A 1331-amino-acid polypeptide reads, in one-letter code: Receptor-type adenylate cyclase B (1331 aa).

The Cytoplasmic portion of the chain corresponds to 1–33 (MYADATHPRRACWCGAGGVSGCVRQRHAYRCSR). A helical transmembrane segment spans residues 34–54 (LLAGVLLIVGALTLTLAVSTV). Residues 55-898 (PAAWAAGAVA…SHALTPAQRG (844 aa)) are Extracellular-facing. Residues asparagine 255, asparagine 429, asparagine 558, asparagine 574, and asparagine 657 are each glycosylated (N-linked (GlcNAc...) asparagine). Residues 899–919 (GAIAGIALLTVILLAVAGLAL) form a helical membrane-spanning segment. At 920–1331 (YCCMDNRNND…PTVCNVRGAH (412 aa)) the chain is on the cytoplasmic side. The 155-residue stretch at 940 to 1094 (TLLFTDIESS…DTSNMAARTE (155 aa)) folds into the Guanylate cyclase domain. 2 residues coordinate Mg(2+): aspartate 945 and aspartate 988.

This sequence belongs to the adenylyl cyclase class-3 family. Mg(2+) is required as a cofactor.

The protein resides in the membrane. The catalysed reaction is ATP = 3',5'-cyclic AMP + diphosphate. In terms of biological role, could act as a receptor for an unknown ligand. The polypeptide is Receptor-type adenylate cyclase B (RAC-B) (Leishmania donovani).